The following is a 276-amino-acid chain: Undecaprenyl-diphosphatase (276 aa).

8 helical membrane passes run 2–22 (LEILKAVILGIVEGITEFLPI), 43–63 (FIDMFNVVIQLGAIMAVVVLY), 83–103 (WTLWKKVIIAVIPSVIIGLPL), 111–131 (LMNWLVVSIALIVYGVLFIVI), 147–167 (TLPYKVAILIGCFQILSLIPG), 186–206 (YVAAEFSFFLAIPTMFGASLL), 224–244 (LILAVGVIVSFVVAYASIRFL), and 255–275 (AFGWYRIILGVIVIAYFALLA).

This sequence belongs to the UppP family.

It is found in the cell membrane. It carries out the reaction di-trans,octa-cis-undecaprenyl diphosphate + H2O = di-trans,octa-cis-undecaprenyl phosphate + phosphate + H(+). Functionally, catalyzes the dephosphorylation of undecaprenyl diphosphate (UPP). Confers resistance to bacitracin. The polypeptide is Undecaprenyl-diphosphatase (Limosilactobacillus fermentum (strain NBRC 3956 / LMG 18251) (Lactobacillus fermentum)).